We begin with the raw amino-acid sequence, 66 residues long: DNA gyrase inhibitor YacG (66 aa).

Zn(2+)-binding residues include cysteine 9, cysteine 12, cysteine 28, and cysteine 32.

This sequence belongs to the DNA gyrase inhibitor YacG family. In terms of assembly, interacts with GyrB. Zn(2+) serves as cofactor.

In terms of biological role, inhibits all the catalytic activities of DNA gyrase by preventing its interaction with DNA. Acts by binding directly to the C-terminal domain of GyrB, which probably disrupts DNA binding by the gyrase. This Pseudomonas fluorescens (strain SBW25) protein is DNA gyrase inhibitor YacG.